The following is a 191-amino-acid chain: Guanylate kinase (191 aa).

The 179-residue stretch at 4-182 (GRLIVVSGPS…AREEMIEIMR (179 aa)) folds into the Guanylate kinase-like domain. Residue 11–18 (GPSGAGKS) coordinates ATP.

The protein belongs to the guanylate kinase family.

It is found in the cytoplasm. It carries out the reaction GMP + ATP = GDP + ADP. Essential for recycling GMP and indirectly, cGMP. The chain is Guanylate kinase from Rubrobacter xylanophilus (strain DSM 9941 / JCM 11954 / NBRC 16129 / PRD-1).